An 821-amino-acid chain; its full sequence is V-type proton ATPase subunit a3 (821 aa).

An N-acetylalanine modification is found at Ala2. The Cytoplasmic segment spans residues 2-421 (AESGGGGGCC…ANPGVFTIVT (420 aa)). Residues 97 to 144 (KENDIDLDDVEVKLGELEAELVEINANNDKLQRSYNELMEYKLVLQKA) are a coiled coil. Residue Ser174 is modified to Phosphoserine. A helical membrane pass occupies residues 422–442 (FPFLFAVMFGDWGHGICILLA). At 443 to 469 (TMYLILKEKKLASQKLGDIMEMAFGGR) the chain is on the vacuolar side. The helical transmembrane segment at 470–490 (YVILMMSLFSIYTGLIYNEFF) threads the bilayer. Over 491-548 (SIPFPLFAPSAYDCRDVSCSEATTIGLIKVRDTYPFGLDPVWHGSRSELPFLNSLKMK) the chain is Cytoplasmic. Residues 549-569 (MSILLGVSQMNLGIIMSYFNA) form a helical membrane-spanning segment. Topologically, residues 570 to 581 (RFFKSSVNIWFQ) are vacuolar. The helical transmembrane segment at 582-602 (FIPQMIFLNSLFGYLSVLIII) threads the bilayer. Residues 603-640 (KWCTGSQADLYHVMIYMFLSPMDELGENQLFPHQKTLQ) lie on the Cytoplasmic side of the membrane. Residues 641–661 (LVLLFLALVSVPCMLLPKPFI) traverse the membrane as a helical segment. Residues 662 to 758 (LKKQHEARHQ…LLLAWGYNNP (97 aa)) are Vacuolar-facing. A helical transmembrane segment spans residues 759 to 779 (LILIVGVLVFIFATVGVLLVM). Residues 780 to 821 (ETLSAFLHALRLHWVEFQNKFYEGDGYKFAPFTFIFTANEDE) are Cytoplasmic-facing.

It belongs to the V-ATPase 116 kDa subunit family. In terms of assembly, V-ATPase is a heteromultimeric enzyme composed of a peripheral catalytic V1 complex (components A to H) attached to an integral membrane V0 proton pore complex (components: a, c, c'', d and e). Expressed in etiolated seedlings hypocotyls.

The protein resides in the vacuole membrane. Essential component of the vacuolar proton pump (V-ATPase), a multimeric enzyme that catalyzes the translocation of protons across the membranes. Required for assembly and activity of the V-ATPase. Involved in vacuolar nutrient storage (e.g. accumulation and storage of nitrate) and in tolerance to some toxic ions (e.g. zinc ions sequestration in vacuoles). The polypeptide is V-type proton ATPase subunit a3 (VHA-a3) (Arabidopsis thaliana (Mouse-ear cress)).